The following is a 328-amino-acid chain: Aspartate carbamoyltransferase catalytic subunit (328 aa).

2 residues coordinate carbamoyl phosphate: Arg55 and Thr56. Lys83 serves as a coordination point for L-aspartate. Carbamoyl phosphate is bound by residues Arg105, His135, and Gln138. L-aspartate is bound by residues Arg176 and Arg230. Residues Gly271 and Pro272 each coordinate carbamoyl phosphate.

It belongs to the aspartate/ornithine carbamoyltransferase superfamily. ATCase family. In terms of assembly, heterododecamer (2C3:3R2) of six catalytic PyrB chains organized as two trimers (C3), and six regulatory PyrI chains organized as three dimers (R2).

It catalyses the reaction carbamoyl phosphate + L-aspartate = N-carbamoyl-L-aspartate + phosphate + H(+). It participates in pyrimidine metabolism; UMP biosynthesis via de novo pathway; (S)-dihydroorotate from bicarbonate: step 2/3. Catalyzes the condensation of carbamoyl phosphate and aspartate to form carbamoyl aspartate and inorganic phosphate, the committed step in the de novo pyrimidine nucleotide biosynthesis pathway. The chain is Aspartate carbamoyltransferase catalytic subunit from Streptomyces griseus subsp. griseus (strain JCM 4626 / CBS 651.72 / NBRC 13350 / KCC S-0626 / ISP 5235).